The chain runs to 218 residues: Guanylate kinase (218 aa).

Residues 15–194 (GMMLVLSSPS…SIADVRAILR (180 aa)) form the Guanylate kinase-like domain. Position 22–29 (22–29 (SPSGAGKT)) interacts with ATP.

The protein belongs to the guanylate kinase family.

It localises to the cytoplasm. It carries out the reaction GMP + ATP = GDP + ADP. In terms of biological role, essential for recycling GMP and indirectly, cGMP. The chain is Guanylate kinase from Rhodospirillum rubrum (strain ATCC 11170 / ATH 1.1.1 / DSM 467 / LMG 4362 / NCIMB 8255 / S1).